Consider the following 766-residue polypeptide: DNA ligase (766 aa).

Positions 1-30 are disordered; sequence MSTVNAKGAKPATDANGQSLNPEEPSEALR. NAD(+)-binding positions include 57–61, 106–107, and glutamate 141; these read DAEYD and SL. Lysine 143 serves as the catalytic N6-AMP-lysine intermediate. Positions 164, 201, 317, and 341 each coordinate NAD(+). Zn(2+) contacts are provided by cysteine 435, cysteine 438, cysteine 454, and cysteine 460. Residues 669–758 form the BRCT domain; it reads STPRTLEGVT…PEAFGDRADA (90 aa). The disordered stretch occupies residues 747–766; the sequence is QGPEAFGDRADAADQPAAGE.

The protein belongs to the NAD-dependent DNA ligase family. LigA subfamily. It depends on Mg(2+) as a cofactor. Requires Mn(2+) as cofactor.

The catalysed reaction is NAD(+) + (deoxyribonucleotide)n-3'-hydroxyl + 5'-phospho-(deoxyribonucleotide)m = (deoxyribonucleotide)n+m + AMP + beta-nicotinamide D-nucleotide.. Functionally, DNA ligase that catalyzes the formation of phosphodiester linkages between 5'-phosphoryl and 3'-hydroxyl groups in double-stranded DNA using NAD as a coenzyme and as the energy source for the reaction. It is essential for DNA replication and repair of damaged DNA. The sequence is that of DNA ligase from Kocuria rhizophila (strain ATCC 9341 / DSM 348 / NBRC 103217 / DC2201).